The sequence spans 272 residues: Undecaprenyl-diphosphatase (272 aa).

The next 7 membrane-spanning stretches (helical) occupy residues Phe-22–Gly-42, Ala-45–Trp-65, Ser-92–Ile-112, Pro-118–Leu-138, Tyr-189–Leu-209, Val-228–Ile-248, and Ile-251–Phe-271.

This sequence belongs to the UppP family.

The protein resides in the cell inner membrane. The enzyme catalyses di-trans,octa-cis-undecaprenyl diphosphate + H2O = di-trans,octa-cis-undecaprenyl phosphate + phosphate + H(+). Functionally, catalyzes the dephosphorylation of undecaprenyl diphosphate (UPP). Confers resistance to bacitracin. In Photorhabdus laumondii subsp. laumondii (strain DSM 15139 / CIP 105565 / TT01) (Photorhabdus luminescens subsp. laumondii), this protein is Undecaprenyl-diphosphatase.